We begin with the raw amino-acid sequence, 430 residues long: Lipoyl synthase, chloroplastic (430 aa).

The span at 1–16 shows a compositional bias: polar residues; sequence MRSLATLHQSPASCSR. The transit peptide at 1-40 directs the protein to the chloroplast; sequence MRSLATLHQSPASCSRSAPVAPCPARRANSSRRVARQGPR. Disordered regions lie at residues 1 to 55 and 85 to 119; these read MRSL…SEDV and HLRS…SLGA. Residues 91–119 show a composition bias toward low complexity; that stretch reads KSAAPVSPFAAPSPGSPSASSMLGPSLGA. 7 residues coordinate [4Fe-4S] cluster: C155, C160, C166, C183, C187, C190, and S397. A Radical SAM core domain is found at 166 to 386; it reads CWNGELATAT…KFGQEEIGFR (221 aa).

This sequence belongs to the radical SAM superfamily. Lipoyl synthase family. [4Fe-4S] cluster serves as cofactor.

The protein resides in the plastid. It is found in the chloroplast. It carries out the reaction [[Fe-S] cluster scaffold protein carrying a second [4Fe-4S](2+) cluster] + N(6)-octanoyl-L-lysyl-[protein] + 2 oxidized [2Fe-2S]-[ferredoxin] + 2 S-adenosyl-L-methionine + 4 H(+) = [[Fe-S] cluster scaffold protein] + N(6)-[(R)-dihydrolipoyl]-L-lysyl-[protein] + 4 Fe(3+) + 2 hydrogen sulfide + 2 5'-deoxyadenosine + 2 L-methionine + 2 reduced [2Fe-2S]-[ferredoxin]. It functions in the pathway protein modification; protein lipoylation via endogenous pathway; protein N(6)-(lipoyl)lysine from octanoyl-[acyl-carrier-protein]: step 2/2. In terms of biological role, catalyzes the radical-mediated insertion of two sulfur atoms into the C-6 and C-8 positions of the octanoyl moiety bound to the lipoyl domains of lipoate-dependent enzymes, thereby converting the octanoylated domains into lipoylated derivatives. This Chlamydomonas reinhardtii (Chlamydomonas smithii) protein is Lipoyl synthase, chloroplastic.